The primary structure comprises 475 residues: Endoglucanase A (475 aa).

An N-terminal signal peptide occupies residues 1-26; the sequence is MKKTTAFLLCFLMIFTALLPMQNANA. Histidine 147 is an active-site residue. Glutamate 195 (proton donor) is an active-site residue. Glutamate 332 serves as the catalytic Nucleophile. The Dockerin domain maps to 409 to 474; the sequence is PVIVYGDYNN…LLGMVSKLPS (66 aa).

The protein belongs to the glycosyl hydrolase 5 (cellulase A) family.

The enzyme catalyses Endohydrolysis of (1-&gt;4)-beta-D-glucosidic linkages in cellulose, lichenin and cereal beta-D-glucans.. Functionally, the biological conversion of cellulose to glucose generally requires three types of hydrolytic enzymes: (1) Endoglucanases which cut internal beta-1,4-glucosidic bonds; (2) Exocellobiohydrolases that cut the disaccharide cellobiose from the non-reducing end of the cellulose polymer chain; (3) Beta-1,4-glucosidases which hydrolyze the cellobiose and other short cello-oligosaccharides to glucose. This is Endoglucanase A (celCCA) from Ruminiclostridium cellulolyticum (strain ATCC 35319 / DSM 5812 / JCM 6584 / H10) (Clostridium cellulolyticum).